Reading from the N-terminus, the 361-residue chain is Peptide chain release factor 1 (361 aa).

An N5-methylglutamine modification is found at Gln-237. Positions 287–297 are enriched in basic and acidic residues; sequence KQQKEQSDTRK. Residues 287–313 are disordered; that stretch reads KQQKEQSDTRKSLVGSGDRSERIRTYN.

Belongs to the prokaryotic/mitochondrial release factor family. In terms of processing, methylated by PrmC. Methylation increases the termination efficiency of RF1.

The protein localises to the cytoplasm. Its function is as follows. Peptide chain release factor 1 directs the termination of translation in response to the peptide chain termination codons UAG and UAA. The protein is Peptide chain release factor 1 of Francisella tularensis subsp. novicida (strain U112).